A 214-amino-acid polypeptide reads, in one-letter code: ATP phosphoribosyltransferase (214 aa).

The protein belongs to the ATP phosphoribosyltransferase family. Short subfamily. As to quaternary structure, heteromultimer composed of HisG and HisZ subunits.

It localises to the cytoplasm. It carries out the reaction 1-(5-phospho-beta-D-ribosyl)-ATP + diphosphate = 5-phospho-alpha-D-ribose 1-diphosphate + ATP. It participates in amino-acid biosynthesis; L-histidine biosynthesis; L-histidine from 5-phospho-alpha-D-ribose 1-diphosphate: step 1/9. In terms of biological role, catalyzes the condensation of ATP and 5-phosphoribose 1-diphosphate to form N'-(5'-phosphoribosyl)-ATP (PR-ATP). Has a crucial role in the pathway because the rate of histidine biosynthesis seems to be controlled primarily by regulation of HisG enzymatic activity. The polypeptide is ATP phosphoribosyltransferase (Halorhodospira halophila (strain DSM 244 / SL1) (Ectothiorhodospira halophila (strain DSM 244 / SL1))).